The following is a 506-amino-acid chain: Zinc finger and SCAN domain containing protein 4C (506 aa).

The tract at residues 1-24 (MASQQAPAKDLQTNNLEFTPTDSS) is disordered. Residues 37-119 (SAQLNFSPSN…RFMESLTDEC (83 aa)) enclose the SCAN box domain. 4 consecutive C2H2-type zinc fingers follow at residues 395-417 (YKCE…QRTH), 424-446 (LLCV…EIIH), 452-474 (FKCS…EMIH), and 480-503 (YVCS…RNYH).

Embryonic stem (ES) cell-specific. Expressed in only 5% of ES cells at a given time, but nearly all ES cells express it at least once during 9 passages.

Its subcellular location is the nucleus. It is found in the chromosome. It localises to the telomere. Embryonic stem (ES) cell-specific transcription factor required to regulate ES cell pluripotency. Binds telomeres and plays a key role in genomic stability in ES cells by regulating telomere elongation. Acts as an activator of spontaneous telomere sister chromatid exchange (T-SCE) and telomere elongation in undifferentiated ES cells. This chain is Zinc finger and SCAN domain containing protein 4C (Zscan4c), found in Mus musculus (Mouse).